A 188-amino-acid chain; its full sequence is HGPRTase-like protein 1 (188 aa).

It belongs to the purine/pyrimidine phosphoribosyltransferase family. Archaeal HPRT subfamily.

May catalyze a purine salvage reaction, the substrate is unknown. This Haloferax volcanii (strain ATCC 29605 / DSM 3757 / JCM 8879 / NBRC 14742 / NCIMB 2012 / VKM B-1768 / DS2) (Halobacterium volcanii) protein is HGPRTase-like protein 1.